Consider the following 175-residue polypeptide: Peptide methionine sulfoxide reductase MsrA (175 aa).

Residue C10 is part of the active site.

Belongs to the MsrA Met sulfoxide reductase family.

It catalyses the reaction L-methionyl-[protein] + [thioredoxin]-disulfide + H2O = L-methionyl-(S)-S-oxide-[protein] + [thioredoxin]-dithiol. The catalysed reaction is [thioredoxin]-disulfide + L-methionine + H2O = L-methionine (S)-S-oxide + [thioredoxin]-dithiol. Functionally, has an important function as a repair enzyme for proteins that have been inactivated by oxidation. Catalyzes the reversible oxidation-reduction of methionine sulfoxide in proteins to methionine. This Psychrobacter sp. (strain PRwf-1) protein is Peptide methionine sulfoxide reductase MsrA.